Consider the following 853-residue polypeptide: Auxin response factor 23 (853 aa).

The tract at residues 121 to 141 is disordered; the sequence is KQQEDNGSTEEEVPSAPAAGH. Residues 149 to 251 constitute a DNA-binding region (TF-B3); the sequence is FCKTLTASDT…ELRVGVRRAM (103 aa). 2 disordered regions span residues 422–471 and 647–723; these read ESEP…NNTP and PAKS…QGVS. The segment covering 425 to 455 has biased composition (polar residues); sequence PNGTQRTFQTQENATPKSGFGNSSELESAQK. Over residues 672–686 the composition is skewed to basic and acidic residues; that stretch reads EWRRPDVTEVEKCSD. Residues 706–723 are compositionally biased toward polar residues; that stretch reads PSSQQASRNMSCKSQGVS. Residues 725–809 form the PB1 domain; it reads RSCKKVHKQG…HKIFIYTREE (85 aa). Positions 815-853 are disordered; sequence PGTLNSRSEDSHANSMERGSVGREMRGCLSTSSLNSENC. Residues 843-853 are compositionally biased toward polar residues; sequence LSTSSLNSENC.

Belongs to the ARF family. As to quaternary structure, homodimers and heterodimers.

The protein resides in the nucleus. Auxin response factors (ARFs) are transcriptional factors that bind specifically to the DNA sequence 5'-TGTCTC-3' found in the auxin-responsive promoter elements (AuxREs). The sequence is that of Auxin response factor 23 (ARF23) from Oryza sativa subsp. indica (Rice).